Here is a 509-residue protein sequence, read N- to C-terminus: Ribonuclease Y (509 aa).

A helical transmembrane segment spans residues 5–25; sequence IIILLSVFCGIFFICFIICSS. Positions 199–259 constitute a KH domain; that stretch reads TTNIVKLPSD…IRREIATRTL (61 aa). Residues 325–418 enclose the HD domain; sequence VLAHSIEVAK…VAIADSISAS (94 aa).

This sequence belongs to the RNase Y family.

Its subcellular location is the cell membrane. Its function is as follows. Endoribonuclease that initiates mRNA decay. The chain is Ribonuclease Y from Mycoplasma mycoides subsp. mycoides SC (strain CCUG 32753 / NCTC 10114 / PG1).